We begin with the raw amino-acid sequence, 271 residues long: Acyl-[acyl-carrier-protein]--UDP-N-acetylglucosamine O-acyltransferase (271 aa).

This sequence belongs to the transferase hexapeptide repeat family. LpxA subfamily. In terms of assembly, homotrimer.

The protein localises to the cytoplasm. It catalyses the reaction a (3R)-hydroxyacyl-[ACP] + UDP-N-acetyl-alpha-D-glucosamine = a UDP-3-O-[(3R)-3-hydroxyacyl]-N-acetyl-alpha-D-glucosamine + holo-[ACP]. It functions in the pathway glycolipid biosynthesis; lipid IV(A) biosynthesis; lipid IV(A) from (3R)-3-hydroxytetradecanoyl-[acyl-carrier-protein] and UDP-N-acetyl-alpha-D-glucosamine: step 1/6. In terms of biological role, involved in the biosynthesis of lipid A, a phosphorylated glycolipid that anchors the lipopolysaccharide to the outer membrane of the cell. In Rhizobium rhizogenes (strain K84 / ATCC BAA-868) (Agrobacterium radiobacter), this protein is Acyl-[acyl-carrier-protein]--UDP-N-acetylglucosamine O-acyltransferase.